A 702-amino-acid chain; its full sequence is WVIPLLPLPVIMSMGFGLFFIPTATKNLRRIWAFPSVLFLSIAIVYSVHLSIQQINGSSIYQYLWSWTVNNDFSLEFGYLIDPLTSIMLILITTVGILVLIYSDGYMSHDEGYLRFFVYISFFTTSMLGLVTSSNLIQIYFFWELVGMCSYLLIGFWFTRPIAASACQKAFVTNRVGDFGLLLGILGFFWITGSLEFRDLFKIANNWIPNNGINSLLTTLCAFLLFLGAVAKSAQFPLHVWLPDAMEGPTPISALIHAATMVAAGIFLLARLFPLFISIPLIMTLISLVGTITLFLGATLALAQRDIKRSLAYSTMSQLGYMMLALGIGSYQAALFHLITHAYSKALLFLGSGSVIHSMEPLVGYSPDKSQNMVLMGGLRKYIPITRTTFLWGTLSLCGIPPLACFWSKDEILSNSWLYSPFFGIIASFTAGLTAFYMFRIYLLSFDGYLRVHFQNYSTTKEGSLYSISLWGKKISKGVNRDFVLSRTKNGVSFFSQNRPQIQGNTRNRIGCFSTSFGAKNNFSYPHETGNTMLFPLLILLFFTLFIGFIGISFDNGAMDNGIAELTLLSKWLTPSINLTQESSNSFINSYEFITNAISSVSLAIIGLFIAYILYGSAYSFFQNLNFINSFYKESPKKYFFDQVKKKIYSWSYNRGYIDIFYTRVFTLGIRGLTELTEFFDKGIIDGITNGVGLVSFCIGEG.

Helical transmembrane passes span 1-21, 31-51, 81-101, 117-137, 139-159, 177-197, 211-231, 250-270, 272-292, 319-339, 346-366, 388-408, 417-437, 534-554, and 602-622; these read WVIPLLPLPVIMSMGFGLFFI, IWAFPSVLFLSIAIVYSVHLS, IDPLTSIMLILITTVGILVLI, FVYISFFTTSMLGLVTSSNLI, IYFFWELVGMCSYLLIGFWFT, GDFGLLLGILGFFWITGSLEF, NGINSLLTTLCAFLLFLGAVA, TPISALIHAATMVAAGIFLLA, LFPLFISIPLIMTLISLVGTI, LGYMMLALGIGSYQAALFHLI, ALLFLGSGSVIHSMEPLVGYS, TTFLWGTLSLCGIPPLACFWS, WLYSPFFGIIASFTAGLTAFY, LFPLLILLFFTLFIGFIGISF, and SLAIIGLFIAYILYGSAYSFF.

Belongs to the complex I subunit 5 family. NDH is composed of at least 16 different subunits, 5 of which are encoded in the nucleus.

It localises to the plastid. It is found in the chloroplast thylakoid membrane. The catalysed reaction is a plastoquinone + NADH + (n+1) H(+)(in) = a plastoquinol + NAD(+) + n H(+)(out). The enzyme catalyses a plastoquinone + NADPH + (n+1) H(+)(in) = a plastoquinol + NADP(+) + n H(+)(out). Its function is as follows. NDH shuttles electrons from NAD(P)H:plastoquinone, via FMN and iron-sulfur (Fe-S) centers, to quinones in the photosynthetic chain and possibly in a chloroplast respiratory chain. The immediate electron acceptor for the enzyme in this species is believed to be plastoquinone. Couples the redox reaction to proton translocation, and thus conserves the redox energy in a proton gradient. The protein is NAD(P)H-quinone oxidoreductase subunit 5, chloroplastic (ndhF) of Poa pratensis (Kentucky bluegrass).